The following is a 133-amino-acid chain: Small ribosomal subunit protein uS8 (133 aa).

The protein belongs to the universal ribosomal protein uS8 family. Part of the 30S ribosomal subunit. Contacts proteins S5 and S12.

One of the primary rRNA binding proteins, it binds directly to 16S rRNA central domain where it helps coordinate assembly of the platform of the 30S subunit. This is Small ribosomal subunit protein uS8 from Microcystis aeruginosa (strain NIES-843 / IAM M-2473).